Consider the following 247-residue polypeptide: 5-oxoprolinase subunit A (247 aa).

It belongs to the LamB/PxpA family. Forms a complex composed of PxpA, PxpB and PxpC.

It carries out the reaction 5-oxo-L-proline + ATP + 2 H2O = L-glutamate + ADP + phosphate + H(+). Catalyzes the cleavage of 5-oxoproline to form L-glutamate coupled to the hydrolysis of ATP to ADP and inorganic phosphate. This chain is 5-oxoprolinase subunit A, found in Vibrio vulnificus (strain YJ016).